A 301-amino-acid chain; its full sequence is Small ribosomal subunit protein uS2 (301 aa).

A disordered region spans residues 282–301 (VRKQPVSENENVEAAAAEQK). The segment covering 289-301 (ENENVEAAAAEQK) has biased composition (low complexity).

Belongs to the universal ribosomal protein uS2 family.

The sequence is that of Small ribosomal subunit protein uS2 from Koribacter versatilis (strain Ellin345).